We begin with the raw amino-acid sequence, 37 residues long: Large ribosomal subunit protein bL36 (37 aa).

This sequence belongs to the bacterial ribosomal protein bL36 family.

This is Large ribosomal subunit protein bL36 (rpmJ) from Geobacillus stearothermophilus (Bacillus stearothermophilus).